The following is a 315-amino-acid chain: Outer membrane protease OmpP (315 aa).

An N-terminal signal peptide occupies residues 1 to 23 (MQTKLLAIMLAAPVVFSSQEASA). Residues Asp103, Asp105, Asp230, and His232 contribute to the active site.

This sequence belongs to the peptidase A26 family.

It is found in the cell outer membrane. In terms of biological role, protease; also acts as a receptor for bacteriophage Ox2. The protein is Outer membrane protease OmpP (ompP) of Escherichia coli (strain K12).